Here is a 349-residue protein sequence, read N- to C-terminus: Putative F-box/kelch-repeat protein At4g02310 (349 aa).

In terms of domain architecture, F-box spans 11–58 (SLFSLLPNDIVLNILARVPRWYHPILSCVSKNLRFLVSSSELKITRSL). The stretch at 154 to 204 (KIYVFGGIDDMNKRYYEGIHAQVFDLKTQTWHVGPNLSVKLACLNRSVVTP) is one Kelch repeat.

This is Putative F-box/kelch-repeat protein At4g02310 from Arabidopsis thaliana (Mouse-ear cress).